The following is a 1627-amino-acid chain: MRDKKGPVNKRVDFLSNKLNKYSIRKFTVGTASILIGSLMYLGTQQEAEAAENNIENPTTLKDNVQSKEVKIEEVTNKDTAPQGVEAKSEVTSNKDTIEHEPSVKAEDISKKEDTPKEVADVAEVQPKSSVTHNAETPKVRKARSVDEGSFDITRDSKNVVESTPITIQGKEHFEGYGSVDIQKKPTDLGVSEVTRFNVGNESNGLIGALQLKNKIDFSKDFNFKVRVANNHQSNTTGADGWGFLFSKGNAEEYLTNGGILGDKGLVNSGGFKIDTGYIYTSSMDKTEKQAGQGYRGYGAFVKNDSSGNSQMVGENIDKSKTNFLNYADNSTNTSDGKFHGQRLNDVILTYVASTGKMRAEYAGKTWETSITDLGLSKNQAYNFLITSSQRWGLNQGINANGWMRTDLKGSEFTFTPEAPKTITELEKKVEEIPFKKERKFNPDLAPGTEKVTREGQKGEKTITTPTLKNPLTGVIISKGEPKEEITKDPINELTEYGPETIAPGHRDEFDPKLPTGEKEEVPGKPGIKNPETGDVVRPPVDSVTKYGPVKGDSIVEKEEIPFEKERKFNPDLAPGTEKVTREGQKGEKTITTPTLKNPLTGEIISKGESKEEITKDPINELTEYGPETITPGHRDEFDPKLPTGEKEEVPGKPGIKNPETGDVVRPPVDSVTKYGPVKGDSIVEKEEIPFEKERKFNPDLAPGTEKVTREGQKGEKTITTPTLKNPLTGVIISKGEPKEEITKDPINELTEYGPETITPGHRDEFDPKLPTGEKEEVPGKPGIKNPETGDVVRPPVDSVTKYGPVKGDSIVEKEEIPFKKERKFNPDLAPGTEKVTREGQKGEKTITTPTLKNPLTGEIISKGESKEEITKDPINELTEYGPETITPGHRDEFDPKLPTGEKEEVPGKPGIKNPETGDVVRPPVDSVTKYGPVKGDSIVEKEEIPFEKERKFNPDLAPGTEKVTREGQKGEKTITTPTLKNPLTGEIISKGESKEEITKDPINELTEYGPETITPGHRDEFDPKLPTGEKEEVPGKPGIKNPETGDVVRPPVDSVTKYGPVKGDSIVEKEEIPFKKERKFNPDLAPGTEKVTREGQKGEKTITTPTLKNPLTGEIISKGESKEEITKDPINELTEYGPETITPGHRDEFDPKLPTGEKEEVPGKPGIKNPETGDVVRPPVDSVTKYGPVKGDSIVEKEEIPFEKERKFNPDLAPGTEKVTREGQKGEKTITTPTLKNPLTGEIISKGESKEEITKDPINELTEYGPETITPGHRDEFDPKLPTGEKEEVPGKPGIKNPETGDVVRPPVDSVTKYGPVKGDSIVEKEEIPFEKERKFNPDLAPGTEKVTREGQKGEKTITTPTLKNPLTGEIISKGESKEEITKDPVNELTEFGGEKIPQGHKDIFDPNLPTDQTEKVPGKPGIKNPDTGKVIEEPVDDVIKHGPKTGTPETKTVEIPFETKREFNPKLQPGEERVKQEGQPGSKTITTPITVNPLTGEKVGEGQPTEEITKQPVDKIVEFGGEKPKDPKGPENPEKPSRPTHPSGPVNPNNPGLSKDRAKPNGPVHSMDKNDKVKKSKIAKESVANQEKKRAELPKTGLESTQKGLIFSSIIGIAGLMLLARRRKN.

An N-terminal signal peptide occupies residues 1–50; that stretch reads MRDKKGPVNKRVDFLSNKLNKYSIRKFTVGTASILIGSLMYLGTQQEAEA. A YSIRK-G/S signaling motif motif is present at residues 22–33; the sequence is YSIRKFTVGTAS. The tract at residues 51–418 is ligand binding A region, squamous nasal epithelial cell binding; it reads AENNIENPTT…KGSEFTFTPE (368 aa). 3 disordered regions span residues 74-143, 440-467, and 496-1601; these read EVTN…VRKA, KFNPDLAPGTEKVTREGQKGEKTITTPT, and EYGP…TGLE. 32 stretches are compositionally biased toward basic and acidic residues: residues 96 to 120, 451 to 461, 505 to 523, 554 to 570, 579 to 589, 606 to 619, 633 to 651, 682 to 698, 707 to 717, 736 to 747, 761 to 779, 810 to 826, 835 to 845, 862 to 875, 889 to 907, 938 to 954, 963 to 973, 990 to 1003, 1017 to 1035, 1066 to 1082, 1091 to 1101, 1118 to 1131, 1145 to 1163, 1194 to 1210, 1219 to 1229, 1246 to 1259, 1273 to 1291, 1322 to 1338, 1347 to 1357, 1374 to 1387, 1431 to 1442, and 1459 to 1478; these read DTIEHEPSVKAEDISKKEDTPKEVA, KVTREGQKGEK, GHRDEFDPKLPTGEKEEVP, SIVEKEEIPFEKERKFN, SKGESKEEITKDPI, GEPKEEITKDPI, SIVEKEEIPFKKERKFN, SKGESKEEITKDPV, KVIEEPVDDVIK, and FETKREFNPKLQPGEERVKQ. A G5 1 domain is found at 419-501; that stretch reads APKTITELEK…NELTEYGPET (83 aa). One can recognise a G5 2 domain in the interval 547-629; the sequence is YGPVKGDSIV…NELTEYGPET (83 aa). The region spanning 675–757 is the G5 3 domain; the sequence is YGPVKGDSIV…NELTEYGPET (83 aa). The region spanning 803-885 is the G5 4 domain; sequence YGPVKGDSIV…NELTEYGPET (83 aa). A G5 5 domain is found at 931–1013; it reads YGPVKGDSIV…NELTEYGPET (83 aa). Residues 1059–1141 form the G5 6 domain; the sequence is YGPVKGDSIV…NELTEYGPET (83 aa). The G5 7 domain maps to 1187-1269; that stretch reads YGPVKGDSIV…NELTEYGPET (83 aa). The region spanning 1315-1397 is the G5 8 domain; it reads YGPVKGDSIV…NELTEFGGEK (83 aa). The G5 9 domain occupies 1443-1525; that stretch reads HGPKTGTPET…DKIVEFGGEK (83 aa). Over residues 1481–1495 the composition is skewed to polar residues; it reads QPGSKTITTPITVNP. The segment covering 1509–1539 has biased composition (basic and acidic residues); sequence EITKQPVDKIVEFGGEKPKDPKGPENPEKPS. The LPXTG sorting signal signature appears at 1595-1599; sequence LPKTG. Threonine 1598 is subject to Pentaglycyl murein peptidoglycan amidated threonine. Residues 1599-1627 constitute a propeptide, removed by sortase; sequence GLESTQKGLIFSSIIGIAGLMLLARRRKN.

Its subcellular location is the secreted. The protein resides in the cell wall. Its function is as follows. Promotes adhesion of bacterial cells to human squamous nasal epithelial cells, a phenomenon which is likely to be important in nasal colonization. Forms short, extremely dense and thin fibrils all over the bacterial surface. Does not bind to either buccal cells or non-differentiated keratinocytes. Promotes cellular aggregation leading to biofilm formation. The polypeptide is Surface protein G (sasG) (Staphylococcus aureus (strain NCTC 8325 / PS 47)).